The sequence spans 192 residues: Xanthine phosphoribosyltransferase (192 aa).

2 residues coordinate xanthine: L20 and N27. Position 128–132 (128–132) interacts with 5-phospho-alpha-D-ribose 1-diphosphate; it reads ANGDA. K156 is a binding site for xanthine.

The protein belongs to the purine/pyrimidine phosphoribosyltransferase family. Xpt subfamily. As to quaternary structure, homodimer.

The protein localises to the cytoplasm. The catalysed reaction is XMP + diphosphate = xanthine + 5-phospho-alpha-D-ribose 1-diphosphate. It functions in the pathway purine metabolism; XMP biosynthesis via salvage pathway; XMP from xanthine: step 1/1. Converts the preformed base xanthine, a product of nucleic acid breakdown, to xanthosine 5'-monophosphate (XMP), so it can be reused for RNA or DNA synthesis. This chain is Xanthine phosphoribosyltransferase, found in Staphylococcus aureus (strain MRSA252).